Reading from the N-terminus, the 128-residue chain is ILVQTAPAGPIDVLIGRPALQRPDIAPRHHAPPHRAEREAVEADRSRRTAGDGWGFAGLRQLPAHAGGQHQQGREGQEKASGRRHVRCHIPLCALSVHTTMHTHALSGIATDGHRRFRRRHLCRPRAS.

A disordered region spans residues 21-84 (QRPDIAPRHH…EGQEKASGRR (64 aa)). Composition is skewed to basic and acidic residues over residues 34 to 50 (HRAE…RRTA) and 72 to 81 (QGREGQEKAS).

It belongs to the histidinol dehydrogenase family.

The catalysed reaction is L-histidinol + 2 NAD(+) + H2O = L-histidine + 2 NADH + 3 H(+). The protein operates within amino-acid biosynthesis; L-histidine biosynthesis; L-histidine from 5-phospho-alpha-D-ribose 1-diphosphate: step 9/9. Catalyzes the sequential NAD-dependent oxidations of L-histidinol to L-histidinaldehyde and then to L-histidine. The protein is Putative histidinol dehydrogenase (hisD) of Azospirillum brasilense.